A 396-amino-acid polypeptide reads, in one-letter code: Tryptophan synthase beta chain (396 aa).

An N6-(pyridoxal phosphate)lysine modification is found at K88.

The protein belongs to the TrpB family. In terms of assembly, tetramer of two alpha and two beta chains. Pyridoxal 5'-phosphate is required as a cofactor.

It carries out the reaction (1S,2R)-1-C-(indol-3-yl)glycerol 3-phosphate + L-serine = D-glyceraldehyde 3-phosphate + L-tryptophan + H2O. It participates in amino-acid biosynthesis; L-tryptophan biosynthesis; L-tryptophan from chorismate: step 5/5. Its function is as follows. The beta subunit is responsible for the synthesis of L-tryptophan from indole and L-serine. The sequence is that of Tryptophan synthase beta chain from Actinobacillus pleuropneumoniae serotype 3 (strain JL03).